Consider the following 205-residue polypeptide: SREBP regulating gene protein (205 aa).

Topologically, residues 1 to 16 (MVNLAAMVWRRLLRKR) are cytoplasmic. Residues 17 to 35 (WVLALVFGLSLVYFLTSTF) traverse the membrane as a helical segment. The Lumenal segment spans residues 36 to 205 (KQEERAVRDR…GESPPELFPA (170 aa)). N67 carries an N-linked (GlcNAc...) asparagine glycan.

It belongs to the SPRING family. In terms of assembly, interacts with SCAP.

Its subcellular location is the golgi apparatus membrane. Functionally, positively regulates hepatic SREBP signaling pathway by modulating the proper localization of SCAP (SREBP cleavage-activating protein) to the endoplasmic reticulum, thereby controlling the level of functional SCAP. The chain is SREBP regulating gene protein from Bos taurus (Bovine).